Reading from the N-terminus, the 287-residue chain is Acetyl-coenzyme A carboxylase carboxyl transferase subunit beta (287 aa).

The 263-residue stretch at V25–E287 folds into the CoA carboxyltransferase N-terminal domain. Zn(2+) contacts are provided by C29, C32, C48, and C51. The segment at C29–C51 adopts a C4-type zinc-finger fold.

It belongs to the AccD/PCCB family. Acetyl-CoA carboxylase is a heterohexamer composed of biotin carboxyl carrier protein (AccB), biotin carboxylase (AccC) and two subunits each of ACCase subunit alpha (AccA) and ACCase subunit beta (AccD). Requires Zn(2+) as cofactor.

The protein localises to the cytoplasm. It catalyses the reaction N(6)-carboxybiotinyl-L-lysyl-[protein] + acetyl-CoA = N(6)-biotinyl-L-lysyl-[protein] + malonyl-CoA. It functions in the pathway lipid metabolism; malonyl-CoA biosynthesis; malonyl-CoA from acetyl-CoA: step 1/1. Functionally, component of the acetyl coenzyme A carboxylase (ACC) complex. Biotin carboxylase (BC) catalyzes the carboxylation of biotin on its carrier protein (BCCP) and then the CO(2) group is transferred by the transcarboxylase to acetyl-CoA to form malonyl-CoA. This Aeromonas salmonicida (strain A449) protein is Acetyl-coenzyme A carboxylase carboxyl transferase subunit beta.